The primary structure comprises 177 residues: Large ribosomal subunit protein uL6 (177 aa).

Residues 151-177 (LRPPEPYKGKGVRYAGENVRRKEGKKK) form a disordered region.

The protein belongs to the universal ribosomal protein uL6 family. In terms of assembly, part of the 50S ribosomal subunit.

In terms of biological role, this protein binds to the 23S rRNA, and is important in its secondary structure. It is located near the subunit interface in the base of the L7/L12 stalk, and near the tRNA binding site of the peptidyltransferase center. In Phenylobacterium zucineum (strain HLK1), this protein is Large ribosomal subunit protein uL6.